The sequence spans 202 residues: Small ribosomal subunit protein uS4c (202 aa).

Positions Met90 to Lys158 constitute an S4 RNA-binding domain.

It belongs to the universal ribosomal protein uS4 family. Part of the 30S ribosomal subunit. Contacts protein S5. The interaction surface between S4 and S5 is involved in control of translational fidelity.

It localises to the plastid. Its subcellular location is the chloroplast. Functionally, one of the primary rRNA binding proteins, it binds directly to 16S rRNA where it nucleates assembly of the body of the 30S subunit. With S5 and S12 plays an important role in translational accuracy. The protein is Small ribosomal subunit protein uS4c (rps4) of Anthoceros punctatus (Hornwort).